Reading from the N-terminus, the 420-residue chain is Protein phosphatase methylesterase 1 (420 aa).

Low complexity-rich tracts occupy residues 18–28 (PEAPLLSESSS) and 42–51 (SSVSSTGTVI). The tract at residues 18 to 51 (PEAPLLSESSSMNHPAESSHDEDSSSVSSTGTVI) is disordered. Active-site residues include Ser-197, Asp-223, and His-354.

The protein belongs to the AB hydrolase superfamily.

The enzyme catalyses [phosphatase 2A protein]-C-terminal L-leucine methyl ester + H2O = [phosphatase 2A protein]-C-terminal L-leucine + methanol + H(+). Functionally, demethylates proteins that have been reversibly carboxymethylated. Demethylates the phosphatase PP2A catalytic subunit. The protein is Protein phosphatase methylesterase 1 (ppe1) of Aspergillus fumigatus (strain ATCC MYA-4609 / CBS 101355 / FGSC A1100 / Af293) (Neosartorya fumigata).